The primary structure comprises 163 residues: Phosphopantetheine adenylyltransferase (163 aa).

Ser9 is a substrate binding site. ATP contacts are provided by residues 9-10 (SF) and His17. 3 residues coordinate substrate: Lys41, Ile75, and Arg89. ATP-binding positions include 90–92 (GIR), Glu100, and 125–131 (HLYVRSD).

This sequence belongs to the bacterial CoaD family. Homohexamer. It depends on Mg(2+) as a cofactor.

It localises to the cytoplasm. The enzyme catalyses (R)-4'-phosphopantetheine + ATP + H(+) = 3'-dephospho-CoA + diphosphate. It participates in cofactor biosynthesis; coenzyme A biosynthesis; CoA from (R)-pantothenate: step 4/5. Functionally, reversibly transfers an adenylyl group from ATP to 4'-phosphopantetheine, yielding dephospho-CoA (dPCoA) and pyrophosphate. The sequence is that of Phosphopantetheine adenylyltransferase from Borreliella burgdorferi (strain ZS7) (Borrelia burgdorferi).